The primary structure comprises 746 residues: Polyribonucleotide nucleotidyltransferase (746 aa).

Residues Asp-520 and Asp-526 each coordinate Mg(2+). In terms of domain architecture, KH spans 586–648 (PRIITVKVPV…EAARAAVNAI (63 aa)). Residues 657-729 (GERYLGTVVK…PRGKLSLVPV (73 aa)) enclose the S1 motif domain.

It belongs to the polyribonucleotide nucleotidyltransferase family. The cofactor is Mg(2+).

Its subcellular location is the cytoplasm. It catalyses the reaction RNA(n+1) + phosphate = RNA(n) + a ribonucleoside 5'-diphosphate. Functionally, involved in mRNA degradation. Catalyzes the phosphorolysis of single-stranded polyribonucleotides processively in the 3'- to 5'-direction. The sequence is that of Polyribonucleotide nucleotidyltransferase from Kineococcus radiotolerans (strain ATCC BAA-149 / DSM 14245 / SRS30216).